We begin with the raw amino-acid sequence, 569 residues long: Isochorismate synthase 1, chloroplastic (569 aa).

Residues 1–45 (MASLQFSSQFLGSNTKTHSSIISISRSYSPTPFTRFSRKKYESCS) constitute a chloroplast transit peptide.

This sequence belongs to the isochorismate synthase family. In terms of assembly, monomer. Mg(2+) is required as a cofactor. Leaves.

It is found in the plastid. The protein resides in the chloroplast. The catalysed reaction is chorismate = isochorismate. The protein operates within siderophore biosynthesis; salicylate biosynthesis. In terms of biological role, isochorismate synthase involved in the synthesis of salicylic acid (SA) required for both local and systemic acquired resistance (LAR and SAR) while SA synthesized through the phenylalanine ammonium lyase (PAL) pathway seems to potentiate plant cell death. Also involved in phylloquinone (vitamin K1) synthesis. Has no isochorismate pyruvate lyase (IPL) activity. The polypeptide is Isochorismate synthase 1, chloroplastic (ICS1) (Arabidopsis thaliana (Mouse-ear cress)).